The chain runs to 497 residues: E3 ubiquitin-protein ligase CBL-C (497 aa).

Positions 7–145 (PQGWQWGEPR…SALFPEGKYC (139 aa)) are 4H. Residues 7-321 (PQGWQWGEPR…GKNHNPDLTE (315 aa)) enclose the Cbl-PTB domain. The segment at 146–218 (GHLYQITKGS…FEFDIFTRLF (73 aa)) is EF-hand-like. Ca(2+)-binding residues include aspartate 199, threonine 201, and glutamate 210. The interval 219-321 (QPWPTLLKNW…GKNHNPDLTE (103 aa)) is SH2-like. Arginine 264 provides a ligand contact to 4-O-phospho-L-tyrosine. Residues 322 to 350 (LCRAVLNQCIQVSQEQLQLYQAMNSTFEL) form a linker region. Tyrosine 341 is modified (phosphotyrosine; by SRC). The RING-type zinc-finger motif lies at 351–390 (CKICTERDKDVRIEPCGHLLCSCCLAAWQHSDSQTCPFCR). Positions 351-497 (CKICTERDKD…QVREGATESS (147 aa)) are interaction with RET.

Interacts with Ubiquitin-conjugating enzyme E2 UBE2D2 and UBE2D3. Interacts with EGFR (tyrosine phosphorylated). Interacts with the SH3 domain proteins LYN and CRK. Interacts (via RING-type zinc finger) with TGFB1I1 (via LIM zinc-binding domain 2); the interaction is direct and enhances the E3 activity. Interacts directly with RET (inactive) and CD2AP; dissociates from RET upon RET activation by GDNF which also increases the interaction with CD2AP suggesting dissociation as CBLC:CD2AP complex. Interacts with SRC; the interaction is enhanced when SRC is phosphorylated at 'Tyr-419'. Phosphorylated on multiple tyrosine residues by SRC. Post-translationally, autoubiquitinated, when phosphorylated at Tyr-341.

It carries out the reaction S-ubiquitinyl-[E2 ubiquitin-conjugating enzyme]-L-cysteine + [acceptor protein]-L-lysine = [E2 ubiquitin-conjugating enzyme]-L-cysteine + N(6)-ubiquitinyl-[acceptor protein]-L-lysine.. Phosphorylation at Tyr-341 is necessary and sufficient for the activation of E3 activity. Acts as an E3 ubiquitin-protein ligase, which accepts ubiquitin from specific E2 ubiquitin-conjugating enzymes, and then transfers it to substrates promoting their degradation by the proteasome. Functionally coupled with the E2 ubiquitin-protein ligases UB2D1, UB2D2 and UB2D3. Regulator of EGFR mediated signal transduction; upon EGF activation, ubiquitinates EGFR. Inhibits EGF stimulated MAPK1 activation. Promotes ubiquitination of SRC phosphorylated at 'Tyr-419', has the highest ubiquitin ligase activity among CBL family proteins. In collaboration with CD2AP may act as regulatory checkpoint for Ret signaling by modulating the rate of RET degradation after ligand activation; CD2AP converts it from an inhibitor to a promoter of RET degradation; the function limits the potency of GDNF on neuronal survival. This Rattus norvegicus (Rat) protein is E3 ubiquitin-protein ligase CBL-C (Cblc).